The following is a 119-amino-acid chain: FAD-linked sulfhydryl oxidase (119 aa).

Residues 1–97 enclose the ERV/ALR sulfhydryl oxidase domain; the sequence is MLHWGPKFWR…ISWSEYKNIY (97 aa). Residues Cys-44 and Cys-47 are joined by a disulfide bond.

This sequence belongs to the asfivirus B119L family. As to quaternary structure, interacts with A151R. Requires FAD as cofactor.

It is found in the host cytoplasm. Its subcellular location is the virion. The enzyme catalyses 2 R'C(R)SH + O2 = R'C(R)S-S(R)CR' + H2O2. In terms of biological role, FAD-dependent sulfhydryl oxidase that catalyzes the formation of disulfide bonds in viral proteins produced in the cell cytoplasm. Involved in virion maturation. The chain is FAD-linked sulfhydryl oxidase from Ornithodoros (relapsing fever ticks).